We begin with the raw amino-acid sequence, 309 residues long: Ribonuclease H2 subunit B (309 aa).

Alanine 2 carries the post-translational modification N-acetylalanine. At lysine 295 the chain carries N6-acetyllysine. A Phosphoserine modification is found at serine 296.

The protein belongs to the RNase H2 subunit B family. As to quaternary structure, the RNase H2 complex is a heterotrimer composed of the catalytic subunit RNASEH2A and the non-catalytic subunits RNASEH2B and RNASEH2C.

The protein resides in the nucleus. Non catalytic subunit of RNase H2, an endonuclease that specifically degrades the RNA of RNA:DNA hybrids. Participates in DNA replication, possibly by mediating the removal of lagging-strand Okazaki fragment RNA primers during DNA replication. Mediates the excision of single ribonucleotides from DNA:RNA duplexes. In Bos taurus (Bovine), this protein is Ribonuclease H2 subunit B (RNASEH2B).